A 634-amino-acid polypeptide reads, in one-letter code: 1-deoxy-D-xylulose-5-phosphate synthase (634 aa).

Thiamine diphosphate is bound by residues His-74 and 115–117 (AHS). A Mg(2+)-binding site is contributed by Asp-146. Residues 147 to 148 (GA), Asn-176, Tyr-283, and Glu-365 each bind thiamine diphosphate. Asn-176 is a Mg(2+) binding site.

It belongs to the transketolase family. DXPS subfamily. In terms of assembly, homodimer. It depends on Mg(2+) as a cofactor. Thiamine diphosphate is required as a cofactor.

It catalyses the reaction D-glyceraldehyde 3-phosphate + pyruvate + H(+) = 1-deoxy-D-xylulose 5-phosphate + CO2. It participates in metabolic intermediate biosynthesis; 1-deoxy-D-xylulose 5-phosphate biosynthesis; 1-deoxy-D-xylulose 5-phosphate from D-glyceraldehyde 3-phosphate and pyruvate: step 1/1. Functionally, catalyzes the acyloin condensation reaction between C atoms 2 and 3 of pyruvate and glyceraldehyde 3-phosphate to yield 1-deoxy-D-xylulose-5-phosphate (DXP). This chain is 1-deoxy-D-xylulose-5-phosphate synthase, found in Burkholderia ambifaria (strain MC40-6).